A 248-amino-acid polypeptide reads, in one-letter code: Aquaporin TIP2-3 (248 aa).

Transmembrane regions (helical) follow at residues 20–40 and 54–74; these read AYVA…GSAI and AGLV…VSMA. An NPA 1 motif is present at residues 83–85; that stretch reads NPA. 3 helical membrane passes run 97-119, 141-161, and 168-188; these read TILT…CFLL, GVVM…ATAA, and LGTI…LAAG. An NPA 2 motif is present at residues 196–198; that stretch reads NPA. Residues 217 to 237 traverse the membrane as a helical segment; that stretch reads WVGPLVGGGLAGLVYGDVFIA.

This sequence belongs to the MIP/aquaporin (TC 1.A.8) family. TIP (TC 1.A.8.10) subfamily. As to expression, specifically expressed in roots.

The protein localises to the cell membrane. Functionally, water channel required to facilitate the transport of water across cell membrane. The chain is Aquaporin TIP2-3 (TIP2-3) from Zea mays (Maize).